We begin with the raw amino-acid sequence, 545 residues long: Chaperonin GroEL 1 (545 aa).

Residues 30–33 (TLGP), lysine 51, 87–91 (DGTTT), glycine 415, and aspartate 496 contribute to the ATP site.

It belongs to the chaperonin (HSP60) family. As to quaternary structure, forms a cylinder of 14 subunits composed of two heptameric rings stacked back-to-back. Interacts with the co-chaperonin GroES.

Its subcellular location is the cytoplasm. It carries out the reaction ATP + H2O + a folded polypeptide = ADP + phosphate + an unfolded polypeptide.. Functionally, together with its co-chaperonin GroES, plays an essential role in assisting protein folding. The GroEL-GroES system forms a nano-cage that allows encapsulation of the non-native substrate proteins and provides a physical environment optimized to promote and accelerate protein folding. The sequence is that of Chaperonin GroEL 1 from Nitrobacter hamburgensis (strain DSM 10229 / NCIMB 13809 / X14).